The chain runs to 117 residues: Immunoglobulin kappa variable 1D-16 (117 aa).

A signal peptide spans Met-1 to Cys-22. Residues Asp-23 to Cys-45 form a framework-1 region. The Ig-like domain occupies Ile-24–Pro-117. Cys-45 and Cys-110 form a disulfide bridge. A complementarity-determining-1 region spans residues Arg-46–Ala-56. Residues Trp-57–Tyr-71 are framework-2. Residues Ala-72–Ser-78 form a complementarity-determining-2 region. The tract at residues Gly-79–Cys-110 is framework-3. Positions Gln-111–Pro-117 are complementarity-determining-3.

Immunoglobulins are composed of two identical heavy chains and two identical light chains; disulfide-linked.

The protein resides in the secreted. Its subcellular location is the cell membrane. In terms of biological role, v region of the variable domain of immunoglobulin light chains that participates in the antigen recognition. Immunoglobulins, also known as antibodies, are membrane-bound or secreted glycoproteins produced by B lymphocytes. In the recognition phase of humoral immunity, the membrane-bound immunoglobulins serve as receptors which, upon binding of a specific antigen, trigger the clonal expansion and differentiation of B lymphocytes into immunoglobulins-secreting plasma cells. Secreted immunoglobulins mediate the effector phase of humoral immunity, which results in the elimination of bound antigens. The antigen binding site is formed by the variable domain of one heavy chain, together with that of its associated light chain. Thus, each immunoglobulin has two antigen binding sites with remarkable affinity for a particular antigen. The variable domains are assembled by a process called V-(D)-J rearrangement and can then be subjected to somatic hypermutations which, after exposure to antigen and selection, allow affinity maturation for a particular antigen. The sequence is that of Immunoglobulin kappa variable 1D-16 from Homo sapiens (Human).